The sequence spans 226 residues: ATP synthase subunit a 1 (226 aa).

Helical transmembrane passes span 20-40, 78-98, 113-133, 174-194, and 196-216; these read LTIV…WLIT, YLPF…CTVI, ALAL…SGLV, MILV…MNIL, and LLTG…YIAA.

It belongs to the ATPase A chain family. In terms of assembly, F-type ATPases have 2 components, CF(1) - the catalytic core - and CF(0) - the membrane proton channel. CF(1) has five subunits: alpha(3), beta(3), gamma(1), delta(1), epsilon(1). CF(0) has four main subunits: a, b, b' and c.

The protein resides in the cell inner membrane. In terms of biological role, key component of the proton channel; it plays a direct role in the translocation of protons across the membrane. The chain is ATP synthase subunit a 1 from Chlorobaculum parvum (strain DSM 263 / NCIMB 8327) (Chlorobium vibrioforme subsp. thiosulfatophilum).